Here is a 566-residue protein sequence, read N- to C-terminus: Arginine--tRNA ligase (566 aa).

The 'HIGH' region signature appears at 121–131 (PNIAKPMSMGH).

It belongs to the class-I aminoacyl-tRNA synthetase family. Monomer.

The protein resides in the cytoplasm. It catalyses the reaction tRNA(Arg) + L-arginine + ATP = L-arginyl-tRNA(Arg) + AMP + diphosphate. This chain is Arginine--tRNA ligase, found in Oenococcus oeni (strain ATCC BAA-331 / PSU-1).